A 252-amino-acid chain; its full sequence is Adenosylcobinamide-GDP ribazoletransferase (252 aa).

A run of 7 helical transmembrane segments spans residues 34–54 (GASF…IIYK), 55–75 (LCII…AGIV), 113–133 (YACL…CSIV), 138–158 (LIII…AFIG), 174–194 (IGKW…FFLM), 198–218 (FIYV…FNVF), and 230–250 (LLGA…CVII).

The protein belongs to the CobS family. Mg(2+) is required as a cofactor.

The protein resides in the cell membrane. The enzyme catalyses alpha-ribazole + adenosylcob(III)inamide-GDP = adenosylcob(III)alamin + GMP + H(+). It carries out the reaction alpha-ribazole 5'-phosphate + adenosylcob(III)inamide-GDP = adenosylcob(III)alamin 5'-phosphate + GMP + H(+). The protein operates within cofactor biosynthesis; adenosylcobalamin biosynthesis; adenosylcobalamin from cob(II)yrinate a,c-diamide: step 7/7. Its function is as follows. Joins adenosylcobinamide-GDP and alpha-ribazole to generate adenosylcobalamin (Ado-cobalamin). Also synthesizes adenosylcobalamin 5'-phosphate from adenosylcobinamide-GDP and alpha-ribazole 5'-phosphate. The protein is Adenosylcobinamide-GDP ribazoletransferase of Clostridium kluyveri (strain NBRC 12016).